Here is a 435-residue protein sequence, read N- to C-terminus: Adenylosuccinate synthetase (435 aa).

Residues 11 to 17 (GDEGKGK) and 39 to 41 (GHT) each bind GTP. Catalysis depends on Asp-12, which acts as the Proton acceptor. Residues Asp-12 and Gly-39 each coordinate Mg(2+). IMP-binding positions include 12–15 (DEGK), 37–40 (NAGH), Thr-128, Arg-142, Gln-223, Thr-238, and Arg-302. Residue His-40 is the Proton donor of the active site. Residue 298–304 (SVTGRPR) participates in substrate binding. GTP is bound by residues Arg-304, 330-332 (KLD), and 412-414 (STG).

The protein belongs to the adenylosuccinate synthetase family. In terms of assembly, homodimer. The cofactor is Mg(2+).

The protein resides in the cytoplasm. It carries out the reaction IMP + L-aspartate + GTP = N(6)-(1,2-dicarboxyethyl)-AMP + GDP + phosphate + 2 H(+). It functions in the pathway purine metabolism; AMP biosynthesis via de novo pathway; AMP from IMP: step 1/2. Its function is as follows. Plays an important role in the de novo pathway of purine nucleotide biosynthesis. Catalyzes the first committed step in the biosynthesis of AMP from IMP. The polypeptide is Adenylosuccinate synthetase (Coxiella burnetii (strain CbuK_Q154) (Coxiella burnetii (strain Q154))).